The following is a 147-amino-acid chain: Large ribosomal subunit protein uL15 (147 aa).

The segment covering 1-28 has biased composition (basic residues); that stretch reads MIRRRKKVRKLRGSHTHGWGCKKKHRGG. Residues 1–43 form a disordered region; the sequence is MIRRRKKVRKLRGSHTHGWGCKKKHRGGGSKGGRGMAGTGKRN. The segment covering 29-38 has biased composition (gly residues); it reads GSKGGRGMAG.

Belongs to the universal ribosomal protein uL15 family. Part of the 50S ribosomal subunit.

Its function is as follows. Binds to the 23S rRNA. This Pyrococcus furiosus (strain ATCC 43587 / DSM 3638 / JCM 8422 / Vc1) protein is Large ribosomal subunit protein uL15.